Consider the following 476-residue polypeptide: MTTVSSAFATVAEGAKVVTPRWKKNERNGKLRVMCRYGGSIVSPPQTKSPRYVGGDTRIVAIPSSAETSFASLVSHLTVTLKISYPFKVKYQLPDQELDSLISVEADEDVQIMMEEHGYLSSESSIPQSRIRLFLFPLKSQQSNEAGASQGDSDQCKVETDIDWLGIEESNKPIREELTQPVLQHPKTEMWFVDALKSVEMMQTRRTNSGTSGSGDGNGGICGQESMMLETNSSFGSTSSSVSSSNLPPIKSSGEDNIANSQVKFAPIESVTSNDNSAVTPIPSHELPSHSHAFENKPSSNLYVAELNRPVPVPISGYPPFMNQAQQQHIQVIYTGQPYITGNSPMTLPATAYHHTNHVYYQRPPQPYPIYYIPVEQYSSRHVQALPVKPSTVLNYHQVDSPVVRTSSPLAPEFSSQVYPLSKPVDSSVQTSSEATLNTTSRDAFIYNTDVDDDNDIAHAQIYKSQPPAPTLPSQY.

A signal peptide spans 1–14 (MTTVSSAFATVAEG). The tract at residues 204 to 256 (TRRTNSGTSGSGDGNGGICGQESMMLETNSSFGSTSSSVSSSNLPPIKSSGED) is disordered. Positions 212 to 222 (SGSGDGNGGIC) are enriched in gly residues. The segment covering 233–252 (SSFGSTSSSVSSSNLPPIKS) has biased composition (low complexity).

Homodimer. Interacts with QKY and SUB/SCM at the plasma membrane. In terms of tissue distribution, observed in seedlings, roots, shoots, leaves, stems, inflorescence and flowers.

It is found in the cell membrane. The protein resides in the endomembrane system. Its function is as follows. Collaboratively with SUB and QKY, regulates cell growth anisotropy during gynoecium development, thus linking together cell-cell communication and cellular growth. This is Protein PAL OF QUIRKY from Arabidopsis thaliana (Mouse-ear cress).